The following is a 235-amino-acid chain: Ribonuclease 3 (235 aa).

In terms of domain architecture, RNase III spans 7 to 131; that stretch reads LSALEARIGH…IIGAVFLDGG (125 aa). Position 45 (Glu45) interacts with Mg(2+). Asp49 is an active-site residue. Residues Asp117 and Glu120 each coordinate Mg(2+). Residue Glu120 is part of the active site. A DRBM domain is found at 156–225; it reads DPKTTLQEWA…AAAFLTREKI (70 aa).

It belongs to the ribonuclease III family. Homodimer. Mg(2+) serves as cofactor.

Its subcellular location is the cytoplasm. The catalysed reaction is Endonucleolytic cleavage to 5'-phosphomonoester.. Digests double-stranded RNA. Involved in the processing of primary rRNA transcript to yield the immediate precursors to the large and small rRNAs (23S and 16S). Processes some mRNAs, and tRNAs when they are encoded in the rRNA operon. Processes pre-crRNA and tracrRNA of type II CRISPR loci if present in the organism. The sequence is that of Ribonuclease 3 from Methylocella silvestris (strain DSM 15510 / CIP 108128 / LMG 27833 / NCIMB 13906 / BL2).